Here is a 149-residue protein sequence, read N- to C-terminus: 3-hydroxyacyl-[acyl-carrier-protein] dehydratase FabZ (149 aa).

His47 is an active-site residue.

Belongs to the thioester dehydratase family. FabZ subfamily.

It is found in the cytoplasm. It carries out the reaction a (3R)-hydroxyacyl-[ACP] = a (2E)-enoyl-[ACP] + H2O. Its function is as follows. Involved in unsaturated fatty acids biosynthesis. Catalyzes the dehydration of short chain beta-hydroxyacyl-ACPs and long chain saturated and unsaturated beta-hydroxyacyl-ACPs. The chain is 3-hydroxyacyl-[acyl-carrier-protein] dehydratase FabZ from Thioalkalivibrio sulfidiphilus (strain HL-EbGR7).